The chain runs to 158 residues: Succinate dehydrogenase assembly factor 2, mitochondrial (158 aa).

The transit peptide at 1 to 17 directs the protein to the mitochondrion; sequence MFSANIARKVVCSVCRA.

It belongs to the SDHAF2 family. In terms of assembly, interacts with sdha within the SDH catalytic dimer.

The protein resides in the mitochondrion matrix. Functionally, plays an essential role in the assembly of succinate dehydrogenase (SDH), an enzyme complex (also referred to as respiratory complex II) that is a component of both the tricarboxylic acid (TCA) cycle and the mitochondrial electron transport chain, and which couples the oxidation of succinate to fumarate with the reduction of ubiquinone (coenzyme Q) to ubiquinol. Required for flavinylation (covalent attachment of FAD) of the flavoprotein subunit sdha of the SDH catalytic dimer. The chain is Succinate dehydrogenase assembly factor 2, mitochondrial from Danio rerio (Zebrafish).